We begin with the raw amino-acid sequence, 818 residues long: BDNF/NT-3 growth factors receptor (818 aa).

The first 31 residues, 1 to 31, serve as a signal peptide directing secretion; the sequence is MVSWRRRPGPGLARLWGLCCLVLGCWRGALG. Intrachain disulfides connect Cys-32–Cys-38 and Cys-36–Cys-45. Residues 32–426 lie on the Extracellular side of the membrane; the sequence is CPASCRCSSW…DVSNKENEDS (395 aa). N-linked (GlcNAc...) asparagine glycosylation occurs at Asn-66. One copy of the LRR 1 repeat lies at 71–92; the sequence is YIANQRKLESINDNEVGFYVGL. Residue Asn-94 is glycosylated (N-linked (GlcNAc...) asparagine). The LRR 2 repeat unit spans residues 95-116; it reads LTVVDSGLRFVSRQAFVKNINL. Asn-120 is a glycosylation site (N-linked (GlcNAc...) asparagine). 2 disulfide bridges follow: Cys-151-Cys-175 and Cys-153-Cys-193. Residues 196 to 281 enclose the Ig-like C2-type 1 domain; the sequence is PSANLSNYNI…GEVQTSAELT (86 aa). Asn-199, Asn-204, Asn-226, Asn-253, Asn-287, Asn-324, and Asn-337 each carry an N-linked (GlcNAc...) asparagine glycan. Cysteines 217 and 265 form a disulfide. In terms of domain architecture, Ig-like C2-type 2 spans 295–364; sequence TPDHHWCIPF…NGAYTLLAKN (70 aa). A disulfide bridge connects residues Cys-301 and Cys-344. A provides specificity for BDNF as ligand versus NTF3 and NTF4 region spans residues 384–394; that stretch reads GSGPIVDPDVY. Residues 400–418 show a composition bias toward polar residues; that stretch reads PNDLGDTTNNSNQITSPDV. The segment at 400–420 is disordered; it reads PNDLGDTTNNSNQITSPDVSN. N-linked (GlcNAc...) asparagine glycosylation is present at Asn-408. A helical membrane pass occupies residues 427-450; sequence ITVYVVVGIAALVCTGLVIMLIIL. The Cytoplasmic segment spans residues 451-818; that stretch reads KFGRHSKFGM…ASPVYLDILG (368 aa). A disordered region spans residues 469–494; the sequence is NDDDSASPLHHISNGSNTPSSSEGGP. Polar residues predominate over residues 481-491; it reads SNGSNTPSSSE. Tyr-512 bears the Phosphotyrosine; by autocatalysis mark. A Protein kinase domain is found at 534 to 803; it reads IVLKRELGEG…LNIKEIHSLL (270 aa). ATP contacts are provided by residues 540 to 548 and Lys-568; that span reads LGEGAFGKV. Catalysis depends on Asp-672, which acts as the Proton acceptor. Tyr-698, Tyr-702, Tyr-703, and Tyr-813 each carry phosphotyrosine; by autocatalysis.

It belongs to the protein kinase superfamily. Tyr protein kinase family. Insulin receptor subfamily. As to quaternary structure, exists in a dynamic equilibrium between monomeric (low affinity) and dimeric (high affinity) structures. Interacts (phosphorylated upon activation by BDNF) with SHC1; mediates SHC1 phosphorylation and activation. Interacts (phosphorylated upon activation by BDNF) with PLCG1 and/or PLCG2; mediates PLCG1 phosphorylation and activation. Interacts with SH2B1 and SH2B2. Interacts with NGFR; may regulate the ligand specificity of the receptor. Interacts with SORCS2; this interaction is important for normal targeting to post-synaptic densities in response to high-frequency stimulation. Interacts (phosphorylated upon ligand-binding) with SH2D1A; regulates NTRK2. Interacts with SQSTM1 and KIDINS220. Interacts (phosphorylated upon ligand-binding) with FRS2; activates the MAPK signaling pathway. Interacts with APPL1. Interacts with MAPK8IP3/JIP3 and KLC1; interaction with KLC1 is mediated by MAPK8IP3/JIP3. Ligand-mediated auto-phosphorylation. Detected in embryonic brain and orsal root ganglia.

The protein localises to the cell membrane. The protein resides in the endosome membrane. It is found in the cell projection. Its subcellular location is the axon. It localises to the dendrite. The protein localises to the cytoplasm. The protein resides in the perinuclear region. It is found in the postsynaptic density. It carries out the reaction L-tyrosyl-[protein] + ATP = O-phospho-L-tyrosyl-[protein] + ADP + H(+). Its activity is regulated as follows. The neuronal activity and the influx of calcium positively regulate the kinase activity and the internalization of the receptor which are both important for active signaling. Regulated by NGFR that may control the internalization of the receptor. NGFR may also stimulate the activation by BDNF compared to NTF3 and NTF4. The formation of active receptors dimers able to fully transduce the ligand-mediated signal, may be negatively regulated by the formation of inactive heterodimers with the non-catalytic isoforms. Receptor tyrosine kinase involved in the development and the maturation of the central and the peripheral nervous systems through regulation of neuron survival, proliferation, migration, differentiation, and synapse formation and plasticity. Receptor for BDNF/brain-derived neurotrophic factor and NTF4/neurotrophin-4. Alternatively can also bind NTF3/neurotrophin-3 which is less efficient in activating the receptor but regulates neuron survival through NTRK2. Upon ligand-binding, undergoes homodimerization, autophosphorylation and activation. Recruits, phosphorylates and/or activates several downstream effectors including SHC1, FRS2, SH2B1, SH2B2 and PLCG1 that regulate distinct overlapping signaling cascades. Through SHC1, FRS2, SH2B1, SH2B2 activates the GRB2-Ras-MAPK cascade that regulates for instance neuronal differentiation including neurite outgrowth. Through the same effectors controls the Ras-PI3 kinase-AKT1 signaling cascade that mainly regulates growth and survival. Through PLCG1 and the downstream protein kinase C-regulated pathways controls synaptic plasticity. Thereby, plays a role in learning and memory by regulating both short term synaptic function and long-term potentiation. PLCG1 also leads to NF-Kappa-B activation and the transcription of genes involved in cell survival. Hence, it is able to suppress anoikis, the apoptosis resulting from loss of cell-matrix interactions. May also play a role in neutrophin-dependent calcium signaling in glial cells and mediate communication between neurons and glia. The chain is BDNF/NT-3 growth factors receptor (NTRK2) from Gallus gallus (Chicken).